A 670-amino-acid chain; its full sequence is MTPTPDAPAAADAATGAGWLARRRGALARVALAPIAQAIGRVERVADGIAFVSGLEDTMLNEVLRFEGGVTGFAHTLDEDLISVVLLDPDAGVRAQTAVARTGAVLEVPAGPQLLGRVVDPLGRPLDGGAPLDAAHTLPIERAAPAIIERDLVSEPLDTGVLIVDALFTIGRGQRELIIGDRATGKTSLAIDAIVNQRHSDVICVYVAIGQRASAVRRVIDAVRRYGAPERCVFVVAPAACAPGLQWIAPFAGFSIAEYFRDRGQHALVVVDDLTKHAATHRELALLTREPPGREAYPGDIFYVHARLLERAAKLSAALGGGSLSALPIAETDAGNLAAYIPTNLISITDGQIVLDSALFAANQRPAVDVGLSVSRVGGKAQHPALRAASGRLRLDYAQFLELEAFTRFGGLTDARLRAQITRGERIRALITQPRFRALRTLDEVVLLKALAAGTLDAMSPDLVAPLRERLPAWLDARIAALTPALAPPRDWLADDAALDALAESVGELIERIAADAARRATAGMPAEDAAGDIGGAFGGEQARGDADRDADHGANREVSREVSPEASREVSREVSREVSHEADRDAAADAARVAGRAPGRAEPDRAVPRAMPDGPPRAQADGDRASASRPPPDARGDAARTAPSPQGGADANVNADANVDAEAEARHKR.

ATP is bound at residue 180–187 (GDRATGKT). The segment at 525-670 (MPAEDAAGDI…DAEAEARHKR (146 aa)) is disordered. Residues 543–588 (ARGDADRDADHGANREVSREVSPEASREVSREVSREVSHEADRDAA) are compositionally biased toward basic and acidic residues. Low complexity predominate over residues 589-599 (ADAARVAGRAP). The span at 621–639 (ADGDRASASRPPPDARGDA) shows a compositional bias: basic and acidic residues. The segment covering 650-661 (ADANVNADANVD) has biased composition (low complexity).

This sequence belongs to the ATPase alpha/beta chains family. As to quaternary structure, F-type ATPases have 2 components, CF(1) - the catalytic core - and CF(0) - the membrane proton channel. CF(1) has five subunits: alpha(3), beta(3), gamma(1), delta(1), epsilon(1). CF(0) has three main subunits: a(1), b(2) and c(9-12). The alpha and beta chains form an alternating ring which encloses part of the gamma chain. CF(1) is attached to CF(0) by a central stalk formed by the gamma and epsilon chains, while a peripheral stalk is formed by the delta and b chains.

It localises to the cell inner membrane. The enzyme catalyses ATP + H2O + 4 H(+)(in) = ADP + phosphate + 5 H(+)(out). Functionally, produces ATP from ADP in the presence of a proton gradient across the membrane. The alpha chain is a regulatory subunit. This Burkholderia mallei (strain NCTC 10247) protein is ATP synthase subunit alpha 2.